The following is a 483-amino-acid chain: Regulatory protein ViaA (483 aa).

It belongs to the ViaA family. Homodimer. Interacts with RavA.

It is found in the cytoplasm. Its function is as follows. Component of the RavA-ViaA chaperone complex, which may act on the membrane to optimize the function of some of the respiratory chains. ViaA stimulates the ATPase activity of RavA. This is Regulatory protein ViaA from Salmonella arizonae (strain ATCC BAA-731 / CDC346-86 / RSK2980).